A 185-amino-acid polypeptide reads, in one-letter code: Large ribosomal subunit protein uL22 (185 aa).

This sequence belongs to the universal ribosomal protein uL22 family.

The protein is Large ribosomal subunit protein uL22 (RPL17) of Debaryomyces hansenii (strain ATCC 36239 / CBS 767 / BCRC 21394 / JCM 1990 / NBRC 0083 / IGC 2968) (Yeast).